Consider the following 146-residue polypeptide: Hemoglobin subunit beta-1 (146 aa).

Residues 2 to 146 (EWTDQERATI…VVSALGKQYH (145 aa)) form the Globin domain. Residues His-63 and His-92 each contribute to the heme b site.

The protein belongs to the globin family. As to quaternary structure, hb1 is a heterotetramer of two alpha-1 chains and two beta-1 chains. Hb2 is a heterotetramer of two alpha-2 chains and two beta-1 chains. HbC is a heterotetramer of two alpha-1 chains and two beta-2 chains. In terms of tissue distribution, red blood cells.

Functionally, involved in oxygen transport from gills to the various peripheral tissues. The chain is Hemoglobin subunit beta-1 from Eleginops maclovinus (Patagonian blennie).